The following is a 306-amino-acid chain: Porphobilinogen deaminase (306 aa).

An S-(dipyrrolylmethanemethyl)cysteine modification is found at C239.

The protein belongs to the HMBS family. In terms of assembly, monomer. Dipyrromethane is required as a cofactor.

The catalysed reaction is 4 porphobilinogen + H2O = hydroxymethylbilane + 4 NH4(+). The protein operates within porphyrin-containing compound metabolism; protoporphyrin-IX biosynthesis; coproporphyrinogen-III from 5-aminolevulinate: step 2/4. In terms of biological role, tetrapolymerization of the monopyrrole PBG into the hydroxymethylbilane pre-uroporphyrinogen in several discrete steps. This Helicobacter pylori (strain HPAG1) protein is Porphobilinogen deaminase.